Reading from the N-terminus, the 231-residue chain is Casein kinase II subunit beta (231 aa).

It belongs to the casein kinase 2 subunit beta family. As to quaternary structure, tetramer composed of two alpha chains, one beta chain and one beta' chain. Phosphorylated by alpha subunit.

Functionally, regulatory subunit of casein kinase II/CK2. As part of the kinase complex regulates the basal catalytic activity of the alpha subunit a constitutively active serine/threonine-protein kinase that phosphorylates a large number of substrates containing acidic residues C-terminal to the phosphorylated serine or threonine. In Schizosaccharomyces pombe (strain 972 / ATCC 24843) (Fission yeast), this protein is Casein kinase II subunit beta.